The following is a 220-amino-acid chain: uncharacterized protein (220 aa).

The next 4 membrane-spanning stretches (helical) occupy residues Leu61 to Gly81, Ser85 to Phe105, Phe115 to Leu135, and Leu150 to Leu170.

Its subcellular location is the membrane. This is an uncharacterized protein from Caenorhabditis elegans.